The chain runs to 421 residues: BEN domain-containing protein 5 (421 aa).

Position 133 is an N6-acetyllysine (K133). Residues 180-243 (RALYEELLRN…LNRRLQDVLL (64 aa)) adopt a coiled-coil conformation. K258 is covalently cross-linked (Glycyl lysine isopeptide (Lys-Gly) (interchain with G-Cter in SUMO2)). Positions 302–408 (GSGIWVDEEK…EKIMDINKSC (107 aa)) constitute a BEN domain.

Its function is as follows. Acts as a transcriptional repressor. In Mus musculus (Mouse), this protein is BEN domain-containing protein 5 (Bend5).